A 1102-amino-acid polypeptide reads, in one-letter code: Carbamoyl phosphate synthase large chain (1102 aa).

Residues 1-408 (MPKRSDIQSV…ALQKALRSLE (408 aa)) are carboxyphosphate synthetic domain. ATP-binding residues include Arg129, Arg175, Gly181, Gly182, Glu214, Ile216, Glu221, Gly247, Val248, His249, Gln291, and Glu305. An ATP-grasp 1 domain is found at 137-334 (EAVKEKIGYG…IAKIAAKLAV (198 aa)). Residues Gln291, Glu305, and Asn307 each coordinate Mg(2+). Mn(2+) is bound by residues Gln291, Glu305, and Asn307. The tract at residues 409–551 (KKGSQFAFTG…YFYSSYDEES (143 aa)) is oligomerization domain. The interval 552 to 954 (EVAPRTKPAV…AYAKSQAGAY (403 aa)) is carbamoyl phosphate synthetic domain. The 192-residue stretch at 682–873 (GRVLAEAGLP…LAKAAARISL (192 aa)) folds into the ATP-grasp 2 domain. Arg718, Arg757, Leu759, Glu764, Gly789, Ile790, His791, Ser792, Gln832, and Glu844 together coordinate ATP. Gln832, Glu844, and Asn846 together coordinate Mg(2+). Residues Gln832, Glu844, and Asn846 each coordinate Mn(2+). The 146-residue stretch at 955 to 1100 (GPLPTAGRAF…QEHAEHLTAA (146 aa)) folds into the MGS-like domain. Positions 955–1102 (GPLPTAGRAF…HAEHLTAARD (148 aa)) are allosteric domain.

This sequence belongs to the CarB family. In terms of assembly, composed of two chains; the small (or glutamine) chain promotes the hydrolysis of glutamine to ammonia, which is used by the large (or ammonia) chain to synthesize carbamoyl phosphate. Tetramer of heterodimers (alpha,beta)4. Mg(2+) is required as a cofactor. The cofactor is Mn(2+).

It catalyses the reaction hydrogencarbonate + L-glutamine + 2 ATP + H2O = carbamoyl phosphate + L-glutamate + 2 ADP + phosphate + 2 H(+). The enzyme catalyses hydrogencarbonate + NH4(+) + 2 ATP = carbamoyl phosphate + 2 ADP + phosphate + 2 H(+). Its pathway is amino-acid biosynthesis; L-arginine biosynthesis; carbamoyl phosphate from bicarbonate: step 1/1. It participates in pyrimidine metabolism; UMP biosynthesis via de novo pathway; (S)-dihydroorotate from bicarbonate: step 1/3. Functionally, large subunit of the glutamine-dependent carbamoyl phosphate synthetase (CPSase). CPSase catalyzes the formation of carbamoyl phosphate from the ammonia moiety of glutamine, carbonate, and phosphate donated by ATP, constituting the first step of 2 biosynthetic pathways, one leading to arginine and/or urea and the other to pyrimidine nucleotides. The large subunit (synthetase) binds the substrates ammonia (free or transferred from glutamine from the small subunit), hydrogencarbonate and ATP and carries out an ATP-coupled ligase reaction, activating hydrogencarbonate by forming carboxy phosphate which reacts with ammonia to form carbamoyl phosphate. This chain is Carbamoyl phosphate synthase large chain, found in Streptomyces griseus subsp. griseus (strain JCM 4626 / CBS 651.72 / NBRC 13350 / KCC S-0626 / ISP 5235).